The primary structure comprises 116 residues: Holo-[acyl-carrier-protein] synthase (116 aa).

2 residues coordinate Mg(2+): Asp5 and Glu50.

The protein belongs to the P-Pant transferase superfamily. AcpS family. The cofactor is Mg(2+).

It is found in the cytoplasm. It carries out the reaction apo-[ACP] + CoA = holo-[ACP] + adenosine 3',5'-bisphosphate + H(+). In terms of biological role, transfers the 4'-phosphopantetheine moiety from coenzyme A to a Ser of acyl-carrier-protein. The polypeptide is Holo-[acyl-carrier-protein] synthase (Nitratiruptor sp. (strain SB155-2)).